A 133-amino-acid chain; its full sequence is Small ribosomal subunit protein uS8 (133 aa).

The protein belongs to the universal ribosomal protein uS8 family. As to quaternary structure, part of the 30S ribosomal subunit. Contacts proteins S5 and S12.

Its function is as follows. One of the primary rRNA binding proteins, it binds directly to 16S rRNA central domain where it helps coordinate assembly of the platform of the 30S subunit. This Microcystis aeruginosa (strain NIES-843 / IAM M-2473) protein is Small ribosomal subunit protein uS8.